A 468-amino-acid chain; its full sequence is Transmembrane protein 151B (468 aa).

Residues 1-25 (MPEDGGGDSGDVPEIIPDGEPLREE) are disordered. Transmembrane regions (helical) follow at residues 45–65 (CLLL…CRLA) and 98–118 (YLYI…AECW). The segment at 384–438 (VSSNSLPPARPSGPRLPFSRSRLSLGAGGRATPGVFRSLSGGPLGRRGEDTEPLE) is disordered.

It belongs to the TMEM151 family.

Its subcellular location is the membrane. The sequence is that of Transmembrane protein 151B (TMEM151B) from Bos taurus (Bovine).